A 200-amino-acid polypeptide reads, in one-letter code: 3-isopropylmalate dehydratase small subunit (200 aa).

The protein belongs to the LeuD family. LeuD type 1 subfamily. Heterodimer of LeuC and LeuD.

It catalyses the reaction (2R,3S)-3-isopropylmalate = (2S)-2-isopropylmalate. The protein operates within amino-acid biosynthesis; L-leucine biosynthesis; L-leucine from 3-methyl-2-oxobutanoate: step 2/4. Catalyzes the isomerization between 2-isopropylmalate and 3-isopropylmalate, via the formation of 2-isopropylmaleate. This is 3-isopropylmalate dehydratase small subunit from Campylobacter jejuni (strain RM1221).